Here is a 368-residue protein sequence, read N- to C-terminus: Glycoprotein UL18 (368 aa).

Positions 1–18 (MMTMWCLTLFVLWMLRVV) are cleaved as a signal peptide. The alpha-1-like stretch occupies residues 19-114 (GMHVLRYGYT…EIALGYRSQS (96 aa)). N-linked (GlcNAc...) asparagine; by host glycans are attached at residues asparagine 56, asparagine 66, asparagine 74, asparagine 95, asparagine 123, asparagine 127, asparagine 150, asparagine 167, asparagine 177, asparagine 193, asparagine 240, asparagine 282, and asparagine 291. The tract at residues 115 to 208 (VLTWTHECNT…VIYSGFQPPV (94 aa)) is alpha-2-like. An alpha-3-like region spans residues 209 to 303 (THPVVKGGVR…VEIPISVTSP (95 aa)). The chain crosses the membrane as a helical span at residues 321 to 342 (YNTMTISSVLLALLLCALLFAF).

As to quaternary structure, interacts with host LILRB1.

It is found in the host membrane. Its function is as follows. Plays a role in the protection against host NK cell cytotoxicity by interacting with and modulating the activity of the host inhibitory leukocyte Ig-like receptor 1/LILRB1, which is expressed on monocytes, dendritic cells, as well as subsets of T and NK cells. UL18 exerts an inhibitory effect on LIR-1+ NK cells, while it stimulates LIR-1- NK cell. These modulations prevent lysis of the infected cells by NK cells. The polypeptide is Glycoprotein UL18 (H301) (Homo sapiens (Human)).